The primary structure comprises 254 residues: Imidazole glycerol phosphate synthase subunit HisF (254 aa).

Active-site residues include D11 and D130.

The protein belongs to the HisA/HisF family. Heterodimer of HisH and HisF.

It localises to the cytoplasm. It carries out the reaction 5-[(5-phospho-1-deoxy-D-ribulos-1-ylimino)methylamino]-1-(5-phospho-beta-D-ribosyl)imidazole-4-carboxamide + L-glutamine = D-erythro-1-(imidazol-4-yl)glycerol 3-phosphate + 5-amino-1-(5-phospho-beta-D-ribosyl)imidazole-4-carboxamide + L-glutamate + H(+). It participates in amino-acid biosynthesis; L-histidine biosynthesis; L-histidine from 5-phospho-alpha-D-ribose 1-diphosphate: step 5/9. Its function is as follows. IGPS catalyzes the conversion of PRFAR and glutamine to IGP, AICAR and glutamate. The HisF subunit catalyzes the cyclization activity that produces IGP and AICAR from PRFAR using the ammonia provided by the HisH subunit. The chain is Imidazole glycerol phosphate synthase subunit HisF from Microcystis aeruginosa (strain NIES-843 / IAM M-2473).